A 132-amino-acid chain; its full sequence is MTMTDPLGDMLTRIRNGAARRKASVVTPASKLRARVLDVLQAEGYIRGYSEIDHGNGKAEITIELKYYEGASVIREIGRVSKPGRRVYVSVKSIPQVANGLGITILSTPKGVMADHQAREQNVGGEVLCSVF.

Belongs to the universal ribosomal protein uS8 family. Part of the 30S ribosomal subunit. Contacts proteins S5 and S12.

Its function is as follows. One of the primary rRNA binding proteins, it binds directly to 16S rRNA central domain where it helps coordinate assembly of the platform of the 30S subunit. In Allorhizobium ampelinum (strain ATCC BAA-846 / DSM 112012 / S4) (Agrobacterium vitis (strain S4)), this protein is Small ribosomal subunit protein uS8.